The primary structure comprises 87 residues: Defensin-like protein 176 (87 aa).

The N-terminal stretch at 1–23 is a signal peptide; it reads MAKATSSLVVPIIFLVIFALVEQ. 4 disulfides stabilise this stretch: cysteine 27/cysteine 66, cysteine 36/cysteine 55, cysteine 39/cysteine 60, and cysteine 43/cysteine 62.

The protein belongs to the DEFL family.

The protein resides in the secreted. This is Defensin-like protein 176 (LCR65) from Arabidopsis thaliana (Mouse-ear cress).